Consider the following 289-residue polypeptide: MVGVKPVGSDPDFQPELSGAGSRLAVVKFTMRGCGPCLRIAPAFSSMSNKYPQAVFLEVDVHQCQGTAATNNISATPTFLFFRNKVRIDQYQGADAVGLEEKIKQHLENDPGSNEDADIPKGYMDLMPFINKAGCECLNESDEHGFDNCLRKDMSFLESDCDEQLLITVAFNQPVKLYSMKFQGPDNGQGPKYVKIFINLPRSMDFEEAERSEPTQALELTEDDIKEDGIVPLRYVKFQNVNSVTLFVQSNQGEEETTRISYFTFIGTPVQATNMNDFKRVVGKKGESH.

Residues 2–109 (VGVKPVGSDP…EEKIKQHLEN (108 aa)) form the Thioredoxin domain. Cys-34 and Cys-37 form a disulfide bridge. Ser-113 carries the phosphoserine modification. In terms of domain architecture, PITH spans 115 to 285 (EDADIPKGYM…NDFKRVVGKK (171 aa)).

In terms of assembly, component of the 19S regulatory cap of the 26S proteasome. Interacts with PSMD14/RPN11. Interacts with, and reduces EEF1A1.

Its subcellular location is the cytoplasm. It is found in the nucleus. Active thioredoxin with a redox potential of about -250 mV. This Mus musculus (Mouse) protein is Thioredoxin-like protein 1 (Txnl1).